We begin with the raw amino-acid sequence, 198 residues long: Recombination protein RecR (198 aa).

Residues 57–72 (CRVCANIADENPCGIC) form a C4-type zinc finger. The Toprim domain maps to 80–175 (GLICVVERPR…RVTRLAFGLP (96 aa)).

It belongs to the RecR family.

In terms of biological role, may play a role in DNA repair. It seems to be involved in an RecBC-independent recombinational process of DNA repair. It may act with RecF and RecO. The protein is Recombination protein RecR of Desulforudis audaxviator (strain MP104C).